Here is a 332-residue protein sequence, read N- to C-terminus: Holliday junction branch migration complex subunit RuvB (332 aa).

A large ATPase domain (RuvB-L) region spans residues 1-181 (MSRILDNEIM…FGITGHMEYY (181 aa)). ATP is bound by residues leucine 20, arginine 21, glycine 62, lysine 65, threonine 66, threonine 67, 128–130 (EDF), arginine 171, tyrosine 181, and arginine 218. Threonine 66 serves as a coordination point for Mg(2+). A small ATPAse domain (RuvB-S) region spans residues 182-252 (AHAGLTEIVE…ITDKALTMLD (71 aa)). A head domain (RuvB-H) region spans residues 255–332 (HEGLDYVDQK…EHLGYEYSEK (78 aa)). Residues arginine 291, arginine 310, arginine 312, and arginine 315 each coordinate DNA.

Belongs to the RuvB family. Homohexamer. Forms an RuvA(8)-RuvB(12)-Holliday junction (HJ) complex. HJ DNA is sandwiched between 2 RuvA tetramers; dsDNA enters through RuvA and exits via RuvB. An RuvB hexamer assembles on each DNA strand where it exits the tetramer. Each RuvB hexamer is contacted by two RuvA subunits (via domain III) on 2 adjacent RuvB subunits; this complex drives branch migration. In the full resolvosome a probable DNA-RuvA(4)-RuvB(12)-RuvC(2) complex forms which resolves the HJ.

The protein localises to the cytoplasm. It catalyses the reaction ATP + H2O = ADP + phosphate + H(+). Its function is as follows. The RuvA-RuvB-RuvC complex processes Holliday junction (HJ) DNA during genetic recombination and DNA repair, while the RuvA-RuvB complex plays an important role in the rescue of blocked DNA replication forks via replication fork reversal (RFR). RuvA specifically binds to HJ cruciform DNA, conferring on it an open structure. The RuvB hexamer acts as an ATP-dependent pump, pulling dsDNA into and through the RuvAB complex. RuvB forms 2 homohexamers on either side of HJ DNA bound by 1 or 2 RuvA tetramers; 4 subunits per hexamer contact DNA at a time. Coordinated motions by a converter formed by DNA-disengaged RuvB subunits stimulates ATP hydrolysis and nucleotide exchange. Immobilization of the converter enables RuvB to convert the ATP-contained energy into a lever motion, pulling 2 nucleotides of DNA out of the RuvA tetramer per ATP hydrolyzed, thus driving DNA branch migration. The RuvB motors rotate together with the DNA substrate, which together with the progressing nucleotide cycle form the mechanistic basis for DNA recombination by continuous HJ branch migration. Branch migration allows RuvC to scan DNA until it finds its consensus sequence, where it cleaves and resolves cruciform DNA. The protein is Holliday junction branch migration complex subunit RuvB of Streptococcus pneumoniae (strain JJA).